The following is a 332-amino-acid chain: MALPDFTMRQLLEAGVHFGHQAHRWNPKMADFIFGARNNIHIIDLAQTVPLMHRALQAVSDTVAKGGRILFVGTKRQAQDGVADAAKRSAQYFVNSRWLGGTLTNWKTVSGSIRRLRQLEEMLGSAEGSQYTKKERLTLQRERDKLDRSLGGIKDMGGLPDLIFVIDTNKEDIAIQEAQRLGIPVAAIVDTNCDPKGITYVVPGNDDAGRAIALYCDLIARAAIDGISRAQGDAGIDVGALAAPPQEDAVEASKTEGFQGLAGPRGVADDLKKLSGVSGAIEKKLNDLGIFHYWQIAELDSATAHKIGEEVGLPARVDGWVSQSKSLTADAE.

Belongs to the universal ribosomal protein uS2 family.

The chain is Small ribosomal subunit protein uS2 from Afipia carboxidovorans (strain ATCC 49405 / DSM 1227 / KCTC 32145 / OM5) (Oligotropha carboxidovorans).